Consider the following 251-residue polypeptide: Ditrans,polycis-undecaprenyl-diphosphate synthase ((2E,6E)-farnesyl-diphosphate specific) (251 aa).

Aspartate 26 is an active-site residue. Aspartate 26 is a Mg(2+) binding site. Substrate contacts are provided by residues 27-30 (GNGR), tryptophan 31, arginine 39, histidine 43, and 71-73 (SSE). Asparagine 74 functions as the Proton acceptor in the catalytic mechanism. Substrate contacts are provided by residues tryptophan 75, arginine 77, arginine 194, and 200-202 (RIS). Residue glutamate 213 participates in Mg(2+) binding.

This sequence belongs to the UPP synthase family. As to quaternary structure, homodimer. Requires Mg(2+) as cofactor.

It catalyses the reaction 8 isopentenyl diphosphate + (2E,6E)-farnesyl diphosphate = di-trans,octa-cis-undecaprenyl diphosphate + 8 diphosphate. In terms of biological role, catalyzes the sequential condensation of isopentenyl diphosphate (IPP) with (2E,6E)-farnesyl diphosphate (E,E-FPP) to yield (2Z,6Z,10Z,14Z,18Z,22Z,26Z,30Z,34E,38E)-undecaprenyl diphosphate (di-trans,octa-cis-UPP). UPP is the precursor of glycosyl carrier lipid in the biosynthesis of bacterial cell wall polysaccharide components such as peptidoglycan and lipopolysaccharide. The polypeptide is Ditrans,polycis-undecaprenyl-diphosphate synthase ((2E,6E)-farnesyl-diphosphate specific) (Buchnera aphidicola subsp. Acyrthosiphon pisum (strain APS) (Acyrthosiphon pisum symbiotic bacterium)).